The chain runs to 83 residues: Cobrotoxin homolog (83 aa).

The signal sequence occupies residues 1-21 (METLLLTLLVVTIVCLDLGYT). Disulfide bonds link cysteine 24–cysteine 45, cysteine 38–cysteine 62, cysteine 64–cysteine 75, and cysteine 76–cysteine 81.

This sequence belongs to the three-finger toxin family. Short-chain subfamily. Type I alpha-neurotoxin sub-subfamily. In terms of tissue distribution, expressed by the venom gland.

It localises to the secreted. Its function is as follows. Binds to muscle nicotinic acetylcholine receptor (nAChR) and inhibit acetylcholine from binding to the receptor, thereby impairing neuromuscular transmission. The polypeptide is Cobrotoxin homolog (Naja naja (Indian cobra)).